The primary structure comprises 435 residues: Serine hydroxymethyltransferase (435 aa).

(6S)-5,6,7,8-tetrahydrofolate contacts are provided by residues leucine 131 and 135 to 137 (GHL). The residue at position 240 (lysine 240) is an N6-(pyridoxal phosphate)lysine.

This sequence belongs to the SHMT family. As to quaternary structure, homodimer. Pyridoxal 5'-phosphate is required as a cofactor.

The protein resides in the cytoplasm. The enzyme catalyses (6R)-5,10-methylene-5,6,7,8-tetrahydrofolate + glycine + H2O = (6S)-5,6,7,8-tetrahydrofolate + L-serine. Its pathway is one-carbon metabolism; tetrahydrofolate interconversion. It functions in the pathway amino-acid biosynthesis; glycine biosynthesis; glycine from L-serine: step 1/1. In terms of biological role, catalyzes the reversible interconversion of serine and glycine with tetrahydrofolate (THF) serving as the one-carbon carrier. This reaction serves as the major source of one-carbon groups required for the biosynthesis of purines, thymidylate, methionine, and other important biomolecules. Also exhibits THF-independent aldolase activity toward beta-hydroxyamino acids, producing glycine and aldehydes, via a retro-aldol mechanism. This chain is Serine hydroxymethyltransferase, found in Bifidobacterium longum subsp. infantis (strain ATCC 15697 / DSM 20088 / JCM 1222 / NCTC 11817 / S12).